Here is a 1032-residue protein sequence, read N- to C-terminus: Caspase recruitment domain-containing protein 10 (1032 aa).

3 disordered regions span residues Met1–Glu23, Arg253–Asn276, and Glu481–Ile553. Ser18 carries the phosphoserine modification. One can recognise a CARD domain in the interval Glu23 to Glu115. A coiled-coil region spans residues Thr138–Gly456. Basic and acidic residues-rich tracts occupy residues Ala261 to Asn276 and His504 to Asn517.

As to quaternary structure, CARD10 and BCL10 bind to each other by CARD-CARD interaction. They both participate in a complex with MALT1, where MALT1 binds to BCL10. Interacts with TMEM43; this interaction is essential for EGFR-mediated NF-kappa-B activation. In terms of tissue distribution, detected in adult heart, kidney and liver; lower levels in intestine, placenta, muscle and lung. Also found in fetal lung, liver and kidney.

Its subcellular location is the cytoplasm. Scaffold protein that plays an important role in mediating the activation of NF-kappa-B via BCL10 or EGFR. This is Caspase recruitment domain-containing protein 10 (CARD10) from Homo sapiens (Human).